We begin with the raw amino-acid sequence, 197 residues long: Phosphoheptose isomerase (197 aa).

The 158-residue stretch at 40 to 197 (CIASIAQGGK…LVEHSIFGKQ (158 aa)) folds into the SIS domain. 55–57 (NGG) contacts substrate. 2 residues coordinate Zn(2+): H64 and E68. Substrate contacts are provided by residues E68, 97–98 (ND), 123–125 (STS), S128, and Q175. 2 residues coordinate Zn(2+): Q175 and H183.

Belongs to the SIS family. GmhA subfamily. As to quaternary structure, homotetramer. The cofactor is Zn(2+).

Its subcellular location is the cytoplasm. It catalyses the reaction 2 D-sedoheptulose 7-phosphate = D-glycero-alpha-D-manno-heptose 7-phosphate + D-glycero-beta-D-manno-heptose 7-phosphate. Its pathway is carbohydrate biosynthesis; D-glycero-D-manno-heptose 7-phosphate biosynthesis; D-glycero-alpha-D-manno-heptose 7-phosphate and D-glycero-beta-D-manno-heptose 7-phosphate from sedoheptulose 7-phosphate: step 1/1. It participates in capsule biogenesis; capsule polysaccharide biosynthesis. Its function is as follows. Catalyzes the isomerization of sedoheptulose 7-phosphate in D-glycero-D-manno-heptose 7-phosphate. This Burkholderia mallei (strain ATCC 23344) protein is Phosphoheptose isomerase.